Consider the following 440-residue polypeptide: T-box transcription factor TBX20 (440 aa).

A DNA-binding region (T-box) is located at residues 103–282 (LWDKFHDLGT…SNPFAKGFRD (180 aa)).

It is found in the nucleus. In terms of biological role, transcriptional regulator that may be involved in heart developmental processes. The chain is T-box transcription factor TBX20 (tbx20) from Xenopus tropicalis (Western clawed frog).